The primary structure comprises 248 residues: Geranylgeranylglyceryl phosphate synthase (248 aa).

The Mg(2+) site is built by Asp25 and Ser50. Sn-glycerol 1-phosphate contacts are provided by residues 170–176 (YLEAGSG), 201–202 (GG), and 223–224 (GT).

The protein belongs to the GGGP/HepGP synthase family. Group II subfamily. Mg(2+) is required as a cofactor.

Its subcellular location is the cytoplasm. It catalyses the reaction sn-glycerol 1-phosphate + (2E,6E,10E)-geranylgeranyl diphosphate = sn-3-O-(geranylgeranyl)glycerol 1-phosphate + diphosphate. It functions in the pathway membrane lipid metabolism; glycerophospholipid metabolism. Functionally, prenyltransferase that catalyzes the transfer of the geranylgeranyl moiety of geranylgeranyl diphosphate (GGPP) to the C3 hydroxyl of sn-glycerol-1-phosphate (G1P). This reaction is the first ether-bond-formation step in the biosynthesis of archaeal membrane lipids. The sequence is that of Geranylgeranylglyceryl phosphate synthase from Methanococcus aeolicus (strain ATCC BAA-1280 / DSM 17508 / OCM 812 / Nankai-3).